Reading from the N-terminus, the 551-residue chain is uncharacterized protein (551 aa).

It belongs to the GSP E family.

This is an uncharacterized protein from Methanocaldococcus jannaschii (strain ATCC 43067 / DSM 2661 / JAL-1 / JCM 10045 / NBRC 100440) (Methanococcus jannaschii).